The primary structure comprises 126 residues: Methylglyoxal synthase (126 aa).

The 126-residue stretch at 1–126 (MAGSKCLALI…AIKLLPTLEA (126 aa)) folds into the MGS-like domain. Substrate is bound by residues H12, K16, 38–41 (TGTT), and 59–60 (SG). Catalysis depends on D65, which acts as the Proton donor/acceptor. A substrate-binding site is contributed by H92.

The protein belongs to the methylglyoxal synthase family.

It catalyses the reaction dihydroxyacetone phosphate = methylglyoxal + phosphate. In terms of biological role, catalyzes the formation of methylglyoxal from dihydroxyacetone phosphate. The chain is Methylglyoxal synthase from Rhizobium etli (strain ATCC 51251 / DSM 11541 / JCM 21823 / NBRC 15573 / CFN 42).